Here is a 445-residue protein sequence, read N- to C-terminus: ATP-dependent protease ATPase subunit HslU (445 aa).

ATP contacts are provided by residues isoleucine 18, 60–65 (GVGKTE), aspartate 258, glutamate 323, and arginine 395.

Belongs to the ClpX chaperone family. HslU subfamily. A double ring-shaped homohexamer of HslV is capped on each side by a ring-shaped HslU homohexamer. The assembly of the HslU/HslV complex is dependent on binding of ATP.

The protein localises to the cytoplasm. Functionally, ATPase subunit of a proteasome-like degradation complex; this subunit has chaperone activity. The binding of ATP and its subsequent hydrolysis by HslU are essential for unfolding of protein substrates subsequently hydrolyzed by HslV. HslU recognizes the N-terminal part of its protein substrates and unfolds these before they are guided to HslV for hydrolysis. This Syntrophotalea carbinolica (strain DSM 2380 / NBRC 103641 / GraBd1) (Pelobacter carbinolicus) protein is ATP-dependent protease ATPase subunit HslU.